The following is a 306-amino-acid chain: Bifunctional protein FolD (306 aa).

Residues 169–171 (GRS), Ser194, and Ile235 contribute to the NADP(+) site.

It belongs to the tetrahydrofolate dehydrogenase/cyclohydrolase family. Homodimer.

It carries out the reaction (6R)-5,10-methylene-5,6,7,8-tetrahydrofolate + NADP(+) = (6R)-5,10-methenyltetrahydrofolate + NADPH. It catalyses the reaction (6R)-5,10-methenyltetrahydrofolate + H2O = (6R)-10-formyltetrahydrofolate + H(+). The protein operates within one-carbon metabolism; tetrahydrofolate interconversion. Catalyzes the oxidation of 5,10-methylenetetrahydrofolate to 5,10-methenyltetrahydrofolate and then the hydrolysis of 5,10-methenyltetrahydrofolate to 10-formyltetrahydrofolate. The chain is Bifunctional protein FolD from Thermosynechococcus vestitus (strain NIES-2133 / IAM M-273 / BP-1).